The chain runs to 1004 residues: 2-oxoglutarate dehydrogenase E1 component (1004 aa).

The protein belongs to the alpha-ketoglutarate dehydrogenase family. Homodimer. Part of the 2-oxoglutarate dehydrogenase (OGDH) complex composed of E1 (2-oxoglutarate dehydrogenase), E2 (dihydrolipoamide succinyltransferase) and E3 (dihydrolipoamide dehydrogenase); the complex contains multiple copies of the three enzymatic components (E1, E2 and E3). Thiamine diphosphate is required as a cofactor.

The enzyme catalyses N(6)-[(R)-lipoyl]-L-lysyl-[protein] + 2-oxoglutarate + H(+) = N(6)-[(R)-S(8)-succinyldihydrolipoyl]-L-lysyl-[protein] + CO2. Its function is as follows. E1 component of the 2-oxoglutarate dehydrogenase (OGDH) complex which catalyzes the decarboxylation of 2-oxoglutarate, the first step in the conversion of 2-oxoglutarate to succinyl-CoA and CO(2). The protein is 2-oxoglutarate dehydrogenase E1 component of Brucella ovis (strain ATCC 25840 / 63/290 / NCTC 10512).